The chain runs to 834 residues: Periplasmic nitrate reductase (834 aa).

A signal peptide (tat-type signal) is located at residues 1–29 (MNLTRREFAKANAAAIAAAAAGLPILVRA). The region spanning 41–97 (LVWNKAPCRFCGTGCSVMVATRDGQVVATHGDIKAEVNRGINCVKGYFLSKIMYGSD) is the 4Fe-4S Mo/W bis-MGD-type domain. Residues C48, C51, C55, and C83 each contribute to the [4Fe-4S] cluster site. Mo-bis(molybdopterin guanine dinucleotide) contacts are provided by residues K85, Q152, N177, C181, 214–221 (WGSNMAEM), 245–249 (STFEH), 264–266 (QTD), M375, Q379, N485, 511–512 (SD), K534, D561, and 721–730 (TGRVLEHWHT). Position 797 (F797) interacts with substrate. Residues N805 and K822 each contribute to the Mo-bis(molybdopterin guanine dinucleotide) site.

This sequence belongs to the prokaryotic molybdopterin-containing oxidoreductase family. NasA/NapA/NarB subfamily. As to quaternary structure, component of the periplasmic nitrate reductase NapAB complex composed of NapA and NapB. [4Fe-4S] cluster serves as cofactor. Mo-bis(molybdopterin guanine dinucleotide) is required as a cofactor. Post-translationally, predicted to be exported by the Tat system. The position of the signal peptide cleavage has not been experimentally proven.

The protein resides in the periplasm. The enzyme catalyses 2 Fe(II)-[cytochrome] + nitrate + 2 H(+) = 2 Fe(III)-[cytochrome] + nitrite + H2O. In terms of biological role, catalytic subunit of the periplasmic nitrate reductase complex NapAB. Receives electrons from NapB and catalyzes the reduction of nitrate to nitrite. This chain is Periplasmic nitrate reductase, found in Pseudomonas aeruginosa (strain UCBPP-PA14).